We begin with the raw amino-acid sequence, 115 residues long: Ribonuclease P protein component (115 aa).

Belongs to the RnpA family. As to quaternary structure, consists of a catalytic RNA component (M1 or rnpB) and a protein subunit.

It catalyses the reaction Endonucleolytic cleavage of RNA, removing 5'-extranucleotides from tRNA precursor.. RNaseP catalyzes the removal of the 5'-leader sequence from pre-tRNA to produce the mature 5'-terminus. It can also cleave other RNA substrates such as 4.5S RNA. The protein component plays an auxiliary but essential role in vivo by binding to the 5'-leader sequence and broadening the substrate specificity of the ribozyme. The sequence is that of Ribonuclease P protein component from Staphylococcus epidermidis (strain ATCC 35984 / DSM 28319 / BCRC 17069 / CCUG 31568 / BM 3577 / RP62A).